Here is a 313-residue protein sequence, read N- to C-terminus: T-box protein 37 (313 aa).

Residues 19-195 constitute a DNA-binding region (T-box); the sequence is IWEKFYPKTE…HNKFASGFRS (177 aa). The interval 193-228 is disordered; that stretch reads FRSNGKRRLSSESENSENSPPKRSASAISSLTPPAI.

It is found in the nucleus. Transcription factor. Required for mesodermal induction, acting redundantly with transcription factor tbx-38. Together with tbx-38, acts by inducing cell fates in the AB lineage, thereby playing a role in development of the anterior pharynx. The chain is T-box protein 37 (tbx-37) from Caenorhabditis elegans.